Consider the following 213-residue polypeptide: uncharacterized protein (213 aa).

A signal peptide spans 1-21 (MKKILFLTVICFCLSSIKAYA).

This is an uncharacterized protein from Rickettsia prowazekii (strain Madrid E).